A 208-amino-acid polypeptide reads, in one-letter code: Large ribosomal subunit protein uL4 (208 aa).

A disordered region spans residues 50–83 (VKTRAEVSGGGRKPWKQKGTGRARQGSIRAPQWK).

The protein belongs to the universal ribosomal protein uL4 family. In terms of assembly, part of the 50S ribosomal subunit.

Its function is as follows. One of the primary rRNA binding proteins, this protein initially binds near the 5'-end of the 23S rRNA. It is important during the early stages of 50S assembly. It makes multiple contacts with different domains of the 23S rRNA in the assembled 50S subunit and ribosome. In terms of biological role, forms part of the polypeptide exit tunnel. In Mycoplasma capricolum subsp. capricolum (strain California kid / ATCC 27343 / NCTC 10154), this protein is Large ribosomal subunit protein uL4.